Reading from the N-terminus, the 284-residue chain is N-acylphosphatidylethanolamine synthase (284 aa).

The helical transmembrane segment at 21 to 37 (TVIMAVSAFAKAVANLC) threads the bilayer. The HXXXXD motif motif lies at 67–72 (HMSTLD). The hydrophilic stretch occupies residues 122–163 (GGGIYQENMNEALQRLKDGSWLHTFPEGKVFQDDVPIRRLKW).

The protein belongs to the taffazin family. In terms of tissue distribution, essentially present in young tissues. Expressed in roots, cotyledons, leaves, and shoot and root apical meristems.

It is found in the cell membrane. Functionally, acyltransferase that catalyzes the N-acylation of phosphatidylethanolamine to form N-acylphosphatidylethanolamine (N-acyl-PE) (e.g. NAPEs containing C16:0, C16:1, C18:0, and C18:1). Also mediates the formation of acylphosphatidylglycerol (acyl-PG) from lysoglycerophospholipid by O-acylation. Uses acyl-CoA as acyl donors. Acylates 1-acyllysophosphatidylethanolamine (1-acyllyso-PE) and 1-acyllysophosphatidylglycerol (1-acyllyso-PG) at the sn-2-position. This is N-acylphosphatidylethanolamine synthase from Arabidopsis thaliana (Mouse-ear cress).